The chain runs to 396 residues: Purine ribonucleoside efflux pump NepI (396 aa).

Topologically, residues 1–21 are cytoplasmic; sequence MSEFIAENRGADAITRPNWSA. Residues 22–42 form a helical membrane-spanning segment; it reads VFSVAFCVACLIIVEFLPVSL. Over 43 to 54 the chain is Periplasmic; that stretch reads LTPMAQDLGISE. The helical transmembrane segment at 55–75 threads the bilayer; sequence GVAGQSVTVTAFVAMFASLFI. The Cytoplasmic portion of the chain corresponds to 76–85; sequence TQTIQATDRC. The chain crosses the membrane as a helical span at residues 86–106; it reads YVVILFAVLLTLSCLLVSFAN. Ser107 is a topological domain (periplasmic). Residues 108-128 traverse the membrane as a helical segment; it reads FSLLLIGRACLGLALGGFWAM. Topologically, residues 129-147 are cytoplasmic; the sequence is SASLTMRLVPPRTVPKALS. A helical membrane pass occupies residues 148-168; sequence VIFGAVSIALVIAAPLGSFLG. Residues 169–175 are Periplasmic-facing; that stretch reads ELIGWRN. The chain crosses the membrane as a helical span at residues 176 to 196; that stretch reads VFNAAAVMGVLCIFWIIKSLP. At 197 to 215 the chain is on the cytoplasmic side; that stretch reads SLPGEPSHQKQNTFRLLQR. A helical membrane pass occupies residues 216 to 236; sequence PGVMAGMIAIFMSFAGQFAFF. Residues 237–255 are Periplasmic-facing; that stretch reads TYIRPVYMNLAGFGVDGLT. The chain crosses the membrane as a helical span at residues 256–276; it reads LVLLSFGIASFIGTSLSSFIL. At 277–281 the chain is on the cytoplasmic side; that stretch reads KRSVK. A helical membrane pass occupies residues 282 to 302; sequence LALAGAPLILAVSALVLTLWG. Residues 303 to 305 are Periplasmic-facing; that stretch reads SDK. A helical membrane pass occupies residues 306–326; it reads IVATGVAIIWGLTFALVPVGW. Over 327-343 the chain is Cytoplasmic; that stretch reads STWITRSLADQAEKAGS. The chain crosses the membrane as a helical span at residues 344–364; it reads IQVAVIQLANTCGAAIGGYAL. Over 365–366 the chain is Periplasmic; it reads DN. Residues 367 to 387 traverse the membrane as a helical segment; the sequence is IGLTSPLMLSGTLMLLTALLV. At 388-396 the chain is on the cytoplasmic side; it reads TAKVKMKKS.

Belongs to the major facilitator superfamily. DHA1 family. NepI (TC 2.A.1.2.26) subfamily.

Its subcellular location is the cell inner membrane. The catalysed reaction is inosine(in) + H(+)(out) = inosine(out) + H(+)(in). It carries out the reaction guanosine(in) + H(+)(out) = guanosine(out) + H(+)(in). In terms of biological role, involved in the efflux of purine ribonucleosides, such as inosine and guanosine. The polypeptide is Purine ribonucleoside efflux pump NepI (Shigella boydii serotype 4 (strain Sb227)).